The following is a 206-amino-acid chain: FKBP-type 22 kDa peptidyl-prolyl cis-trans isomerase (206 aa).

In terms of domain architecture, PPIase FKBP-type spans 120-206; it reads TDRVRVHYTG…VFEVELLEIL (87 aa).

Homodimer.

The protein resides in the cytoplasm. It localises to the periplasm. The enzyme catalyses [protein]-peptidylproline (omega=180) = [protein]-peptidylproline (omega=0). Its activity is regulated as follows. Strongly inhibited by FK506. Its function is as follows. PPIases accelerate the folding of proteins. Catalyzes the cis-trans isomerization of proline imidic peptide bonds in oligopeptides. Displays a preference for substrates with a lysyl residue in the P1 position. In Escherichia coli (strain K12), this protein is FKBP-type 22 kDa peptidyl-prolyl cis-trans isomerase (fklB).